The sequence spans 200 residues: uncharacterized protein (200 aa).

Disordered stretches follow at residues 1-27 (MTDTRREQEKDERRKLQEQSRQNEAET), 42-79 (IPKEAKGNEPLLENYKSGLQETRKELETTPDATKSTNA), and 169-200 (HGRAGIVRNPQAAQHQRQRQMEKTGAGREHGR). The span at 187-200 (RQMEKTGAGREHGR) shows a compositional bias: basic and acidic residues.

This is an uncharacterized protein from Shigella flexneri.